A 378-amino-acid chain; its full sequence is Ferredoxin--NADP reductase, root isozyme, chloroplastic (378 aa).

Low complexity predominate over residues 1-17 (MATAVASQVAVSAPAGS). Residues 1 to 27 (MATAVASQVAVSAPAGSDRGLRSSGIQ) are disordered. Residues 1 to 62 (MATAVASQVA…PRHANKVLCM (62 aa)) constitute a chloroplast transit peptide. Positions 93–221 (KEPYTATIVS…TGPSGKIMLL (129 aa)) constitute an FAD-binding FR-type domain. FAD is bound by residues 153-156 (RLYS), 174-176 (CVR), Tyr-180, 195-197 (VCS), and Thr-237. NADP(+) contacts are provided by Ser-156 and Arg-176. NADP(+) is bound by residues Thr-237, 269–270 (VA), 299–300 (SR), Lys-309, 337–338 (GL), and Glu-376.

The protein belongs to the ferredoxin--NADP reductase type 1 family. FAD serves as cofactor.

It is found in the plastid. The protein localises to the chloroplast. It catalyses the reaction 2 reduced [2Fe-2S]-[ferredoxin] + NADP(+) + H(+) = 2 oxidized [2Fe-2S]-[ferredoxin] + NADPH. Its pathway is energy metabolism; photosynthesis. Its function is as follows. May play a key role in regulating the relative amounts of cyclic and non-cyclic electron flow to meet the demands of the plant for ATP and reducing power. Is involved in nitrate assimilation. The protein is Ferredoxin--NADP reductase, root isozyme, chloroplastic of Oryza sativa subsp. japonica (Rice).